Here is a 315-residue protein sequence, read N- to C-terminus: Lipoyl synthase (315 aa).

7 residues coordinate [4Fe-4S] cluster: Cys63, Cys68, Cys74, Cys89, Cys93, Cys96, and Ser303. The 218-residue stretch at 75–292 (FSKGTATFMI…EEKAYEMGFV (218 aa)) folds into the Radical SAM core domain.

It belongs to the radical SAM superfamily. Lipoyl synthase family. [4Fe-4S] cluster is required as a cofactor.

The protein localises to the cytoplasm. The enzyme catalyses [[Fe-S] cluster scaffold protein carrying a second [4Fe-4S](2+) cluster] + N(6)-octanoyl-L-lysyl-[protein] + 2 oxidized [2Fe-2S]-[ferredoxin] + 2 S-adenosyl-L-methionine + 4 H(+) = [[Fe-S] cluster scaffold protein] + N(6)-[(R)-dihydrolipoyl]-L-lysyl-[protein] + 4 Fe(3+) + 2 hydrogen sulfide + 2 5'-deoxyadenosine + 2 L-methionine + 2 reduced [2Fe-2S]-[ferredoxin]. It functions in the pathway protein modification; protein lipoylation via endogenous pathway; protein N(6)-(lipoyl)lysine from octanoyl-[acyl-carrier-protein]: step 2/2. Its function is as follows. Catalyzes the radical-mediated insertion of two sulfur atoms into the C-6 and C-8 positions of the octanoyl moiety bound to the lipoyl domains of lipoate-dependent enzymes, thereby converting the octanoylated domains into lipoylated derivatives. The chain is Lipoyl synthase from Chromobacterium violaceum (strain ATCC 12472 / DSM 30191 / JCM 1249 / CCUG 213 / NBRC 12614 / NCIMB 9131 / NCTC 9757 / MK).